The primary structure comprises 115 residues: Large ribosomal subunit protein uL22 (115 aa).

Belongs to the universal ribosomal protein uL22 family. As to quaternary structure, part of the 50S ribosomal subunit.

This protein binds specifically to 23S rRNA; its binding is stimulated by other ribosomal proteins, e.g. L4, L17, and L20. It is important during the early stages of 50S assembly. It makes multiple contacts with different domains of the 23S rRNA in the assembled 50S subunit and ribosome. Functionally, the globular domain of the protein is located near the polypeptide exit tunnel on the outside of the subunit, while an extended beta-hairpin is found that lines the wall of the exit tunnel in the center of the 70S ribosome. The protein is Large ribosomal subunit protein uL22 of Enterococcus faecalis (strain ATCC 700802 / V583).